A 148-amino-acid chain; its full sequence is Arginine repressor (148 aa).

The protein belongs to the ArgR family.

The protein localises to the cytoplasm. It participates in amino-acid biosynthesis; L-arginine biosynthesis [regulation]. Its function is as follows. Regulates arginine biosynthesis genes. This Chlorobium luteolum (strain DSM 273 / BCRC 81028 / 2530) (Pelodictyon luteolum) protein is Arginine repressor.